The primary structure comprises 293 residues: 4-hydroxy-tetrahydrodipicolinate synthase (293 aa).

T44 contributes to the pyruvate binding site. Y132 serves as the catalytic Proton donor/acceptor. Catalysis depends on K161, which acts as the Schiff-base intermediate with substrate. Residue I203 coordinates pyruvate.

The protein belongs to the DapA family. In terms of assembly, homotetramer; dimer of dimers.

The protein localises to the cytoplasm. It catalyses the reaction L-aspartate 4-semialdehyde + pyruvate = (2S,4S)-4-hydroxy-2,3,4,5-tetrahydrodipicolinate + H2O + H(+). Its pathway is amino-acid biosynthesis; L-lysine biosynthesis via DAP pathway; (S)-tetrahydrodipicolinate from L-aspartate: step 3/4. In terms of biological role, catalyzes the condensation of (S)-aspartate-beta-semialdehyde [(S)-ASA] and pyruvate to 4-hydroxy-tetrahydrodipicolinate (HTPA). This Persephonella marina (strain DSM 14350 / EX-H1) protein is 4-hydroxy-tetrahydrodipicolinate synthase.